The chain runs to 82 residues: Small ribosomal subunit protein bS18 (82 aa).

The segment at methionine 1–threonine 25 is disordered.

It belongs to the bacterial ribosomal protein bS18 family. As to quaternary structure, part of the 30S ribosomal subunit. Forms a tight heterodimer with protein bS6.

In terms of biological role, binds as a heterodimer with protein bS6 to the central domain of the 16S rRNA, where it helps stabilize the platform of the 30S subunit. This chain is Small ribosomal subunit protein bS18, found in Bartonella henselae (strain ATCC 49882 / DSM 28221 / CCUG 30454 / Houston 1) (Rochalimaea henselae).